We begin with the raw amino-acid sequence, 1289 residues long: SH3 domain and tetratricopeptide repeat-containing protein 2 (1289 aa).

SH3 domains lie at 176-239 and 267-330; these read EGHF…PLPV and IGRG…LDSC. The interval 393–442 is disordered; the sequence is SQPEGFREARSGGTWMERQTIGSRRSSGSGDSSPEEDELISASSDSYHLP. The segment covering 414 to 424 has biased composition (low complexity); the sequence is GSRRSSGSGDS. 8 TPR repeats span residues 529–562, 758–791, 837–870, 1002–1038, 1085–1119, 1120–1153, 1167–1200, and 1211–1245; these read ARLCFLLGRLSIRKTKLSQARVYFEEAIRVLDGA, RTLCLILSKMYLQHQSPDGSVHYLSQAHVLGKLL, GVVHNLLGLAFEDEGRTSRAAKSYLRALIRAREM, GQLLESLGQLYRNLNTSRSLRRSLACIKESLRIFVDL, LKLYEEAGDVFFNGTRHRHRAVEYYRAGAVPLARR, MKALRTELRIFNKLTELQISLEGYEKALEFATLA, LVAFHRLATVYFSLNMYEMAEDCYLKTLSLCPPW, and AKVYCRLGRLTFYQLKDAHDATEYFLLALAAAVLM.

This chain is SH3 domain and tetratricopeptide repeat-containing protein 2 (Sh3tc2), found in Mus musculus (Mouse).